The sequence spans 549 residues: Glucose-6-phosphate isomerase (549 aa).

Glu-355 functions as the Proton donor in the catalytic mechanism. Residues His-387 and Lys-515 contribute to the active site.

It belongs to the GPI family.

The protein resides in the cytoplasm. The enzyme catalyses alpha-D-glucose 6-phosphate = beta-D-fructose 6-phosphate. The protein operates within carbohydrate biosynthesis; gluconeogenesis. It participates in carbohydrate degradation; glycolysis; D-glyceraldehyde 3-phosphate and glycerone phosphate from D-glucose: step 2/4. In terms of biological role, catalyzes the reversible isomerization of glucose-6-phosphate to fructose-6-phosphate. The polypeptide is Glucose-6-phosphate isomerase (Haemophilus influenzae (strain 86-028NP)).